Reading from the N-terminus, the 60-residue chain is Andropin (60 aa).

The signal sequence occupies residues 1 to 23 (MKYFVVLVVLALILAIAVGPSDA).

The protein belongs to the andropin family. As to expression, ejaculatory duct of adult males.

Its subcellular location is the secreted. Its function is as follows. Male-specific peptide with moderate activity against Gram-positive bacteria. The polypeptide is Andropin (Anp) (Drosophila simulans (Fruit fly)).